A 69-amino-acid polypeptide reads, in one-letter code: Cell division protein ZapB (69 aa).

Residues 3–60 (LELFNQLEQKVQNAVETIEMLKMEAEELREENTRLKQERDEWERRLNGLLGKFQEIED) are a coiled coil.

Belongs to the ZapB family. In terms of assembly, homodimer. The ends of the coiled-coil dimer bind to each other, forming polymers. Interacts with FtsZ.

Its subcellular location is the cytoplasm. In terms of biological role, non-essential, abundant cell division factor that is required for proper Z-ring formation. It is recruited early to the divisome by direct interaction with FtsZ, stimulating Z-ring assembly and thereby promoting cell division earlier in the cell cycle. Its recruitment to the Z-ring requires functional FtsA or ZipA. The sequence is that of Cell division protein ZapB from Chromohalobacter salexigens (strain ATCC BAA-138 / DSM 3043 / CIP 106854 / NCIMB 13768 / 1H11).